The primary structure comprises 296 residues: D-alanine--D-alanine ligase (296 aa).

The ATP-grasp domain occupies 103–293 (KEILMHHRMP…FDSFVKRIIE (191 aa)). 129 to 180 (ISFPVAVKPSSGGSSIATFKVKSIQELKHAYEEASKYGEVMIEQWVTGKEIT) is a binding site for ATP. Positions 247, 260, and 262 each coordinate Mg(2+).

The protein belongs to the D-alanine--D-alanine ligase family. Requires Mg(2+) as cofactor. The cofactor is Mn(2+).

Its subcellular location is the cytoplasm. It carries out the reaction 2 D-alanine + ATP = D-alanyl-D-alanine + ADP + phosphate + H(+). It functions in the pathway cell wall biogenesis; peptidoglycan biosynthesis. Its function is as follows. Cell wall formation. This is D-alanine--D-alanine ligase from Francisella tularensis subsp. novicida (strain U112).